Here is a 348-residue protein sequence, read N- to C-terminus: Histidinol-phosphate aminotransferase (348 aa).

N6-(pyridoxal phosphate)lysine is present on Lys-210.

This sequence belongs to the class-II pyridoxal-phosphate-dependent aminotransferase family. Histidinol-phosphate aminotransferase subfamily. In terms of assembly, homodimer. The cofactor is pyridoxal 5'-phosphate.

The catalysed reaction is L-histidinol phosphate + 2-oxoglutarate = 3-(imidazol-4-yl)-2-oxopropyl phosphate + L-glutamate. Its pathway is amino-acid biosynthesis; L-histidine biosynthesis; L-histidine from 5-phospho-alpha-D-ribose 1-diphosphate: step 7/9. The polypeptide is Histidinol-phosphate aminotransferase (Pseudomonas putida (strain ATCC 47054 / DSM 6125 / CFBP 8728 / NCIMB 11950 / KT2440)).